A 117-amino-acid polypeptide reads, in one-letter code: Peptidyl-tRNA hydrolase (117 aa).

The protein belongs to the PTH2 family.

Its subcellular location is the cytoplasm. The enzyme catalyses an N-acyl-L-alpha-aminoacyl-tRNA + H2O = an N-acyl-L-amino acid + a tRNA + H(+). Functionally, the natural substrate for this enzyme may be peptidyl-tRNAs which drop off the ribosome during protein synthesis. This is Peptidyl-tRNA hydrolase from Thermoplasma volcanium (strain ATCC 51530 / DSM 4299 / JCM 9571 / NBRC 15438 / GSS1).